We begin with the raw amino-acid sequence, 140 residues long: uncharacterized protein (140 aa).

One can recognise a VOC domain in the interval 4-127 (TLTHLALHVP…AGNYVEFSYG (124 aa)).

This is an uncharacterized protein from Pseudomonas aeruginosa (strain ATCC 15692 / DSM 22644 / CIP 104116 / JCM 14847 / LMG 12228 / 1C / PRS 101 / PAO1).